Consider the following 1184-residue polypeptide: DNA-directed RNA polymerase subunit beta' (1184 aa).

Residues Cys-60, Cys-62, Cys-75, and Cys-78 each contribute to the Zn(2+) site. 3 residues coordinate Mg(2+): Asp-449, Asp-451, and Asp-453. Residues Cys-794, Cys-867, Cys-874, and Cys-877 each coordinate Zn(2+).

Belongs to the RNA polymerase beta' chain family. In terms of assembly, the RNAP catalytic core consists of 2 alpha, 1 beta, 1 beta' and 1 omega subunit. When a sigma factor is associated with the core the holoenzyme is formed, which can initiate transcription. Requires Mg(2+) as cofactor. It depends on Zn(2+) as a cofactor.

The catalysed reaction is RNA(n) + a ribonucleoside 5'-triphosphate = RNA(n+1) + diphosphate. In terms of biological role, DNA-dependent RNA polymerase catalyzes the transcription of DNA into RNA using the four ribonucleoside triphosphates as substrates. The chain is DNA-directed RNA polymerase subunit beta' from Thermoanaerobacter sp. (strain X514).